Consider the following 122-residue polypeptide: Small ribosomal subunit protein uS13 (122 aa).

A disordered region spans residues 93–122 (RRGLPVRGQNTKTNARTRKGPKRTAGGKKK). Over residues 107–122 (ARTRKGPKRTAGGKKK) the composition is skewed to basic residues.

Belongs to the universal ribosomal protein uS13 family. As to quaternary structure, part of the 30S ribosomal subunit. Forms a loose heterodimer with protein S19. Forms two bridges to the 50S subunit in the 70S ribosome.

In terms of biological role, located at the top of the head of the 30S subunit, it contacts several helices of the 16S rRNA. In the 70S ribosome it contacts the 23S rRNA (bridge B1a) and protein L5 of the 50S subunit (bridge B1b), connecting the 2 subunits; these bridges are implicated in subunit movement. Contacts the tRNAs in the A and P-sites. The sequence is that of Small ribosomal subunit protein uS13 from Syntrophomonas wolfei subsp. wolfei (strain DSM 2245B / Goettingen).